The following is a 497-amino-acid chain: Ammonium transporter Rh type C (497 aa).

Residues 1-9 (MAWNTNLRG) are Cytoplasmic-facing. Residues 10–30 (RLPITCLILQVTMVVLFGVFV) traverse the membrane as a helical segment. At 31–61 (RYDIQADAHWWLEKKRKNISSDVENEFYYRY) the chain is on the extracellular side. The N-linked (GlcNAc...) asparagine glycan is linked to asparagine 48. A helical transmembrane segment spans residues 62–82 (PSFEDVHAMVFVGFGFLMTYL). The Cytoplasmic portion of the chain corresponds to 83-93 (QRYGFSAVGFN). The helical transmembrane segment at 94–114 (FLLAAFGIQWALLMQGWFHFF) threads the bilayer. The Extracellular portion of the chain corresponds to 115–125 (EEGHILLSVEN). A helical transmembrane segment spans residues 126 to 145 (LIQADFCVASTCVAFGAVLG). The Cytoplasmic segment spans residues 146–151 (KISPMQ). The chain crosses the membrane as a helical span at residues 152–174 (LLIMTFFQVTLFTVNEFILLNLI). Residues 175–179 (EAKDA) lie on the Extracellular side of the membrane. Residues 180–200 (GGSMTIHTFGAYFGLTVTWIL) traverse the membrane as a helical segment. Topologically, residues 201 to 219 (YRKNLEQSKQRQSSVYHSD) are cytoplasmic. Residues 220-240 (LFAMIGTLFLWIYWPSFNSAS) traverse the membrane as a helical segment. The Extracellular portion of the chain corresponds to 241–251 (SFHGDTQHRAA). A helical transmembrane segment spans residues 252–272 (LNTYLSLAASVLTTVAVSSVI). Topologically, residues 273–282 (HKKGKLDMVH) are cytoplasmic. Residues 283 to 303 (IQNATLAGGVGVGTAAEMMLT) form a helical membrane-spanning segment. A topological domain (extracellular) is located at residue proline 304. The helical transmembrane segment at 305–325 (YGALIVGFFCGILSTLGFAYL) threads the bilayer. Topologically, residues 326 to 340 (SPFLESRLRIQDTCG) are cytoplasmic. The chain crosses the membrane as a helical span at residues 341–361 (IHNLHGIPGIIGGIVGAVTAA). The Extracellular portion of the chain corresponds to 362–395 (YSSPDVYGEPGIVHSFGFGGYKADWTKRMQGRSQ). A helical transmembrane segment spans residues 396–416 (IFGLLLSLAMALVGGIIVGFI). The Cytoplasmic segment spans residues 417-497 (LKLPFWGQAS…ATVTSSSLVH (81 aa)).

The protein belongs to the ammonium transporter (TC 2.A.49) family. Rh subfamily. As to quaternary structure, homotrimer. N-glycosylated. As to expression, expressed by connecting tubule cells and intercalated cells of the collecting duct in kidney (at protein level).

It is found in the cell membrane. The protein localises to the apical cell membrane. It catalyses the reaction NH4(+)(in) = NH4(+)(out). It carries out the reaction methylamine(out) = methylamine(in). The catalysed reaction is CO2(out) = CO2(in). Functionally, ammonium transporter involved in the maintenance of acid-base homeostasis. Transports ammonium and its related derivative methylammonium across the plasma membrane of epithelial cells likely contributing to renal transepithelial ammonia transport and ammonia metabolism. Postulated to primarily mediate an electroneutral bidirectional transport of NH3 ammonia species according to a mechanism that implies interaction of an NH4(+) ion with acidic residues of the pore entry followed by dissociation of NH4(+) into NH3 and H(+). As a result NH3 transits through the central pore and is protonated on the extracellular side reforming NH4(+). May act as a CO2 channel providing for renal acid secretion. This chain is Ammonium transporter Rh type C (Rhcg), found in Rattus norvegicus (Rat).